The primary structure comprises 336 residues: Plant-specific TFIIB-related protein 2 (336 aa).

The segment at 2-34 (EEETCLDCKRPTIMVVDHSSGDTICSECGLVLE) adopts a TFIIB-type zinc-finger fold. Zn(2+) is bound by residues C6, C9, C26, and C29.

As to expression, specifically expressed in reproductive organs and seeds.

It is found in the nucleus. In terms of biological role, plant-specific TFIIB-related protein involved in the regulation of endosperm proliferation during the syncytial phase of endosperm development. Does not contribute to RNA polymerase IV or V activities in reproductive tissues. The polypeptide is Plant-specific TFIIB-related protein 2 (Arabidopsis thaliana (Mouse-ear cress)).